A 332-amino-acid polypeptide reads, in one-letter code: Formamidase (332 aa).

Residues 14-259 enclose the CN hydrolase domain; that stretch reads FLTALIQYPV…WEIVTAEVYP (246 aa). E60 functions as the Proton acceptor in the catalytic mechanism. The active-site Proton donor is K132. C165 (nucleophile) is an active-site residue.

The protein belongs to the carbon-nitrogen hydrolase superfamily. Aliphatic amidase family.

The enzyme catalyses formamide + H2O = formate + NH4(+). Is an aliphatic amidase with a restricted substrate specificity, as it only hydrolyzes formamide. The chain is Formamidase from Bacillus cereus (strain ZK / E33L).